A 1396-amino-acid polypeptide reads, in one-letter code: DNA-directed RNA polymerase subunit beta' (1396 aa).

The Zn(2+) site is built by Cys73, Cys75, Cys88, and Cys91. Asp467, Asp469, and Asp471 together coordinate Mg(2+). Residues Cys817, Cys891, Cys898, and Cys901 each coordinate Zn(2+).

This sequence belongs to the RNA polymerase beta' chain family. In terms of assembly, the RNAP catalytic core consists of 2 alpha, 1 beta, 1 beta' and 1 omega subunit. When a sigma factor is associated with the core the holoenzyme is formed, which can initiate transcription. The cofactor is Mg(2+). It depends on Zn(2+) as a cofactor.

The enzyme catalyses RNA(n) + a ribonucleoside 5'-triphosphate = RNA(n+1) + diphosphate. In terms of biological role, DNA-dependent RNA polymerase catalyzes the transcription of DNA into RNA using the four ribonucleoside triphosphates as substrates. This chain is DNA-directed RNA polymerase subunit beta', found in Orientia tsutsugamushi (strain Boryong) (Rickettsia tsutsugamushi).